Here is a 590-residue protein sequence, read N- to C-terminus: Cytidine monophosphate-N-acetylneuraminic acid hydroxylase (590 aa).

In terms of domain architecture, Rieske spans 14–112 (LSPVEVASLK…VEMDENNRLL (99 aa)). [2Fe-2S] cluster-binding residues include Cys54, His56, Cys75, and His78.

It belongs to the CMP-Neu5Ac hydroxylase family. The cofactor is [2Fe-2S] cluster.

It localises to the cytoplasm. The enzyme catalyses CMP-N-acetyl-beta-neuraminate + 2 Fe(II)-[cytochrome b5] + O2 + 2 H(+) = CMP-N-glycoloyl-beta-neuraminate + 2 Fe(III)-[cytochrome b5] + H2O. Its pathway is amino-sugar metabolism; N-acetylneuraminate metabolism. Its function is as follows. Sialic acids are components of carbohydrate chains of glycoconjugates and are involved in cell-cell recognition and cell-pathogen interactions. Catalyzes the conversion of CMP-N-acetylneuraminic acid (CMP-Neu5Ac) into its hydroxylated derivative CMP-N-glycolylneuraminic acid (CMP-Neu5Gc), a sialic acid abundantly expressed at the surface of many cells. The polypeptide is Cytidine monophosphate-N-acetylneuraminic acid hydroxylase (Pan troglodytes (Chimpanzee)).